Consider the following 257-residue polypeptide: Imidazole glycerol phosphate synthase subunit HisF (257 aa).

Residues Asp-11 and Asp-130 contribute to the active site.

This sequence belongs to the HisA/HisF family. As to quaternary structure, heterodimer of HisH and HisF.

The protein localises to the cytoplasm. It carries out the reaction 5-[(5-phospho-1-deoxy-D-ribulos-1-ylimino)methylamino]-1-(5-phospho-beta-D-ribosyl)imidazole-4-carboxamide + L-glutamine = D-erythro-1-(imidazol-4-yl)glycerol 3-phosphate + 5-amino-1-(5-phospho-beta-D-ribosyl)imidazole-4-carboxamide + L-glutamate + H(+). The protein operates within amino-acid biosynthesis; L-histidine biosynthesis; L-histidine from 5-phospho-alpha-D-ribose 1-diphosphate: step 5/9. IGPS catalyzes the conversion of PRFAR and glutamine to IGP, AICAR and glutamate. The HisF subunit catalyzes the cyclization activity that produces IGP and AICAR from PRFAR using the ammonia provided by the HisH subunit. This is Imidazole glycerol phosphate synthase subunit HisF from Bradyrhizobium diazoefficiens (strain JCM 10833 / BCRC 13528 / IAM 13628 / NBRC 14792 / USDA 110).